The primary structure comprises 343 residues: MASAPRVSEVLTKKNLPPLSLYNFYIYIRDEENAIEFLDLFLDIMLHKFLFREHIRGLYKAGVTSTSLNTESSSTLGPHHFTRFRSASLSLEDLSTVYWPNFGPLLLEELSNEQTINSSDLLLSKDRAAYLKNLLTSNIQSLTQESTVISKEQVKMFTQIIIEKYFNPASPHEVMLPPQLVQPILDCKEHQRQDELRLFEDVETYLLNFLLKPAYYRFLNHKFKHNLNPLTCTGRFIIGYVSTFAAYWLGFCGIFLDYSRRKRVWTLLPFAFGFYNLICTWSKHDPVLALLGYSEVKPFHYEKVLQPSIRLSLNRRAIFVLSIIVLIVGANTAIFSCVPSIRL.

The Cytoplasmic segment spans residues 1–235 (MASAPRVSEV…NLNPLTCTGR (235 aa)). An RGS domain is found at 109-228 (ELSNEQTINS…LNHKFKHNLN (120 aa)). Residues 236–256 (FIIGYVSTFAAYWLGFCGIFL) form a helical membrane-spanning segment. At 257–263 (DYSRRKR) the chain is on the extracellular side. The helical transmembrane segment at 264–284 (VWTLLPFAFGFYNLICTWSKH) threads the bilayer. Topologically, residues 285 to 317 (DPVLALLGYSEVKPFHYEKVLQPSIRLSLNRRA) are cytoplasmic. Residues 318–338 (IFVLSIIVLIVGANTAIFSCV) form a helical membrane-spanning segment. The Extracellular portion of the chain corresponds to 339-343 (PSIRL).

The protein localises to the cell membrane. Its subcellular location is the endoplasmic reticulum membrane. Functionally, may be involved in cell polarization and division. The chain is Protein rax1 (rax1) from Schizosaccharomyces pombe (strain 972 / ATCC 24843) (Fission yeast).